A 58-amino-acid chain; its full sequence is T-cell receptor gamma alternate reading frame protein (58 aa).

As to expression, detected at low levels in the ductal cells of the salivary gland but not in the acinar cells (at protein level). Expressed in endometrium (at protein level). Expressed in epithelial cells within the acinar ducts of the prostate.

In Homo sapiens (Human), this protein is T-cell receptor gamma alternate reading frame protein.